A 340-amino-acid chain; its full sequence is Methionine import ATP-binding protein MetN (340 aa).

Residues 5–243 (IEFRGVTKSF…PQTTTARRFV (239 aa)) form the ABC transporter domain. Residue 40–47 (GYSGAGKS) participates in ATP binding.

This sequence belongs to the ABC transporter superfamily. Methionine importer (TC 3.A.1.24) family. As to quaternary structure, the complex is composed of two ATP-binding proteins (MetN), two transmembrane proteins (MetI) and a solute-binding protein (MetQ).

It is found in the cell membrane. The enzyme catalyses L-methionine(out) + ATP + H2O = L-methionine(in) + ADP + phosphate + H(+). It catalyses the reaction D-methionine(out) + ATP + H2O = D-methionine(in) + ADP + phosphate + H(+). Functionally, part of the ABC transporter complex MetNIQ involved in methionine import. Responsible for energy coupling to the transport system. The polypeptide is Methionine import ATP-binding protein MetN (Leifsonia xyli subsp. xyli (strain CTCB07)).